Here is a 317-residue protein sequence, read N- to C-terminus: Melanocyte-stimulating hormone receptor (317 aa).

The Extracellular segment spans residues 1-37 (MPMHGAQRKLLGSLNSTPTATSNLGLAANHTGAPCLE). Residue asparagine 29 is glycosylated (N-linked (GlcNAc...) asparagine). Residues 38-63 (VSIPDGLFLSLGLVSLVENVLVVAAI) form a helical membrane-spanning segment. At 64-72 (AKNRNLHSS) the chain is on the cytoplasmic side. Residues 73–93 (MYCFICCLALSDLLVSGSNML) traverse the membrane as a helical segment. Residues 94-118 (ETAVILLLEAGALATRTSAMQQLHN) lie on the Extracellular side of the membrane. A helical transmembrane segment spans residues 119–140 (TIDVLTCSSMLCSLCFLGAIAV). At 141 to 163 (DRYISIFYALRYHSIMTLPRAQR) the chain is on the cytoplasmic side. Residues 164-183 (AIAAIWVASXLSSTLFITYY) traverse the membrane as a helical segment. The Extracellular segment spans residues 184 to 191 (DHAAVLLC). The helical transmembrane segment at 192-211 (LVVFFLAMLVLMAVLYVHML) threads the bilayer. Residues 212-240 (ARACQHAHGIIRLHKRQTPAHQGFGLRGA) lie on the Cytoplasmic side of the membrane. Residues 241 to 266 (ATLTILLGIFFLCWGPFFLHLTLVVF) traverse the membrane as a helical segment. The Extracellular segment spans residues 267–279 (CPQHLTCSCIFKN). Residues 280 to 300 (FKVFLTLIICNTIIDPLIYAF) form a helical membrane-spanning segment. Residues 301–317 (RSQELRRTLKEVLLCSW) are Cytoplasmic-facing. Cysteine 315 carries the S-palmitoyl cysteine lipid modification.

Belongs to the G-protein coupled receptor 1 family. As to quaternary structure, interacts with MGRN1, but does not undergo MGRN1-mediated ubiquitination; this interaction competes with GNAS-binding and thus inhibits agonist-induced cAMP production. Interacts with OPN3; the interaction results in a decrease in MC1R-mediated cAMP signaling and ultimately a decrease in melanin production in melanocytes.

The protein resides in the cell membrane. Its function is as follows. Receptor for MSH (alpha, beta and gamma) and ACTH. The activity of this receptor is mediated by G proteins which activate adenylate cyclase. Mediates melanogenesis, the production of eumelanin (black/brown) and phaeomelanin (red/yellow), via regulation of cAMP signaling in melanocytes. The sequence is that of Melanocyte-stimulating hormone receptor (MC1R) from Saguinus midas (Golden-handed tamarin).